The following is a 387-amino-acid chain: Succinate--CoA ligase [ADP-forming] subunit beta (387 aa).

Residues 9–244 enclose the ATP-grasp domain; it reads KEVLRKFGVA…LNEEEPSEIE (236 aa). ATP contacts are provided by residues K46, 53–55, E99, C102, and E107; that span reads GRG. N199 and D213 together coordinate Mg(2+). Substrate-binding positions include N264 and 321–323; that span reads GIM.

The protein belongs to the succinate/malate CoA ligase beta subunit family. In terms of assembly, heterotetramer of two alpha and two beta subunits. Requires Mg(2+) as cofactor.

The catalysed reaction is succinate + ATP + CoA = succinyl-CoA + ADP + phosphate. The enzyme catalyses GTP + succinate + CoA = succinyl-CoA + GDP + phosphate. It functions in the pathway carbohydrate metabolism; tricarboxylic acid cycle; succinate from succinyl-CoA (ligase route): step 1/1. Its function is as follows. Succinyl-CoA synthetase functions in the citric acid cycle (TCA), coupling the hydrolysis of succinyl-CoA to the synthesis of either ATP or GTP and thus represents the only step of substrate-level phosphorylation in the TCA. The beta subunit provides nucleotide specificity of the enzyme and binds the substrate succinate, while the binding sites for coenzyme A and phosphate are found in the alpha subunit. The polypeptide is Succinate--CoA ligase [ADP-forming] subunit beta (Bdellovibrio bacteriovorus (strain ATCC 15356 / DSM 50701 / NCIMB 9529 / HD100)).